The following is a 260-amino-acid chain: tRNA pseudouridine synthase C (260 aa).

Aspartate 54 is a catalytic residue.

Belongs to the pseudouridine synthase RluA family.

The catalysed reaction is uridine(65) in tRNA = pseudouridine(65) in tRNA. Functionally, responsible for synthesis of pseudouridine from uracil-65 in transfer RNAs. The protein is tRNA pseudouridine synthase C (truC) of Salmonella typhimurium (strain LT2 / SGSC1412 / ATCC 700720).